A 306-amino-acid polypeptide reads, in one-letter code: tRNA pseudouridine synthase B (306 aa).

D48 functions as the Nucleophile in the catalytic mechanism.

Belongs to the pseudouridine synthase TruB family. Type 1 subfamily.

The enzyme catalyses uridine(55) in tRNA = pseudouridine(55) in tRNA. Responsible for synthesis of pseudouridine from uracil-55 in the psi GC loop of transfer RNAs. This is tRNA pseudouridine synthase B from Haemophilus influenzae (strain PittEE).